The sequence spans 578 residues: Adhesion G protein-coupled receptor A1 (578 aa).

Topologically, residues 1–22 (MTQWDLKTVLSLPQYPGEFLHP) are extracellular. A helical transmembrane segment spans residues 23-43 (VVYACTAVMLLCLLASVITYI). At 44–56 (LHQSAIRISRKGR) the chain is on the cytoplasmic side. A helical transmembrane segment spans residues 57-77 (HALLNFCFHAALTFTVFAGGI). The Extracellular segment spans residues 78 to 87 (NRTQHPILCQ). Residues 88 to 108 (AVGIALHYSTLSTMLWIGVTA) form a helical membrane-spanning segment. Over 109–137 (RNIYKQVTKKALPCPGADQPPYPKQPLLR) the chain is Cytoplasmic. Residues 138–158 (FYLISGGVPFIICGVTAATNI) form a helical membrane-spanning segment. Residues 159–178 (RNYGTEDEDVAYCWMAWEPS) are Extracellular-facing. Residues 179–199 (LGAFYGPAAFIALVTCVYFLC) traverse the membrane as a helical segment. At 200-262 (TYVQLRRHPE…NEHSFKAQLR (63 aa)) the chain is on the cytoplasmic side. Positions 216 to 236 (ERTEEQQRLAVPESGHRHGVR) are disordered. Residues 263 to 283 (AAAFTLFLFTATWTFGALAVS) traverse the membrane as a helical segment. The Extracellular portion of the chain corresponds to 284–289 (QGHFLD). The helical transmembrane segment at 290–310 (MIFSCLYGAFCVTLGLFVLIH) threads the bilayer. 2 disordered regions span residues 463–486 (PSSL…EGPM) and 537–578 (SLPF…ETTV). A compositionally biased stretch (low complexity) spans 469–481 (SPHSSRSESPTSS). Residues 537–548 (SLPFGGPSQNGL) show a composition bias toward polar residues.

The protein belongs to the G-protein coupled receptor 2 family. Adhesion G-protein coupled receptor (ADGR) subfamily. Predominantly expressed in CNS.

It localises to the membrane. This Mus musculus (Mouse) protein is Adhesion G protein-coupled receptor A1.